A 437-amino-acid chain; its full sequence is Aspartic proteinase CDR1 (437 aa).

An N-terminal signal peptide occupies residues 1-25; the sequence is MASLFSSVLLSLCLLSSLFLSNANA. A propeptide spans 26 to 73 (activation peptide); it reads KPKLGFTADLIHRDSPKSPFYNPMETSSQRLRNAIHRSVNRVFHFTEK. In terms of domain architecture, Peptidase A1 spans 90–430; that stretch reads YLMNVSIGTP…DTVSKTVSFK (341 aa). Residue Asn93 is glycosylated (N-linked (GlcNAc...) asparagine). Active-site residues include Asp108 and Asp319.

It belongs to the peptidase A1 family.

It localises to the secreted. The protein localises to the extracellular space. Its subcellular location is the apoplast. Its function is as follows. Involved in salicylic acid-dependent inducible resistance responses. May release an endogenous peptide elicitor required for the activation of inducible resistance mechanisms. Possesses protease activity in vitro. This chain is Aspartic proteinase CDR1 (CDR1), found in Arabidopsis thaliana (Mouse-ear cress).